We begin with the raw amino-acid sequence, 343 residues long: tRNA N6-adenosine threonylcarbamoyltransferase (343 aa).

Fe cation is bound by residues His-120 and His-124. Substrate-binding positions include 142 to 146 (VVSGG), Asp-175, Gly-188, Asp-192, and Asn-281. A Fe cation-binding site is contributed by Asp-310.

It belongs to the KAE1 / TsaD family. The cofactor is Fe(2+).

It localises to the cytoplasm. It carries out the reaction L-threonylcarbamoyladenylate + adenosine(37) in tRNA = N(6)-L-threonylcarbamoyladenosine(37) in tRNA + AMP + H(+). Functionally, required for the formation of a threonylcarbamoyl group on adenosine at position 37 (t(6)A37) in tRNAs that read codons beginning with adenine. Is involved in the transfer of the threonylcarbamoyl moiety of threonylcarbamoyl-AMP (TC-AMP) to the N6 group of A37, together with TsaE and TsaB. TsaD likely plays a direct catalytic role in this reaction. In Bacillus cereus (strain ATCC 10987 / NRS 248), this protein is tRNA N6-adenosine threonylcarbamoyltransferase.